A 131-amino-acid chain; its full sequence is SPbeta prophage-derived uncharacterized protein YosD (131 aa).

Positions 102–131 are disordered; that stretch reads EHNNKKAKNNDTQNQRQIKTSWWQRLTKKD. Residues 111–125 are compositionally biased toward polar residues; sequence NDTQNQRQIKTSWWQ.

This Bacillus subtilis (strain 168) protein is SPbeta prophage-derived uncharacterized protein YosD (yosD).